We begin with the raw amino-acid sequence, 1074 residues long: DNA-directed RNA polymerase subunit beta (1074 aa).

Belongs to the RNA polymerase beta chain family. In plastids the minimal PEP RNA polymerase catalytic core is composed of four subunits: alpha, beta, beta', and beta''. When a (nuclear-encoded) sigma factor is associated with the core the holoenzyme is formed, which can initiate transcription.

It localises to the plastid. Its subcellular location is the chloroplast. The catalysed reaction is RNA(n) + a ribonucleoside 5'-triphosphate = RNA(n+1) + diphosphate. DNA-dependent RNA polymerase catalyzes the transcription of DNA into RNA using the four ribonucleoside triphosphates as substrates. This is DNA-directed RNA polymerase subunit beta from Chara vulgaris (Common stonewort).